A 147-amino-acid polypeptide reads, in one-letter code: UPF0306 protein YhbP (147 aa).

Belongs to the UPF0306 family.

This Salmonella agona (strain SL483) protein is UPF0306 protein YhbP.